A 453-amino-acid polypeptide reads, in one-letter code: tRNA modification GTPase MnmE (453 aa).

The (6S)-5-formyl-5,6,7,8-tetrahydrofolate site is built by Arg-23, Glu-80, and Lys-120. A TrmE-type G domain is found at 216–375 (GSKIVIIGKP…LIKYLKDLNC (160 aa)). Asn-226 provides a ligand contact to K(+). GTP contacts are provided by residues 226 to 231 (NSGKSS), 245 to 251 (TSIEGTT), and 270 to 273 (DTAG). Ser-230 serves as a coordination point for Mg(2+). K(+) is bound by residues Thr-245, Ile-247, and Thr-250. Thr-251 provides a ligand contact to Mg(2+). A (6S)-5-formyl-5,6,7,8-tetrahydrofolate-binding site is contributed by Lys-453.

Belongs to the TRAFAC class TrmE-Era-EngA-EngB-Septin-like GTPase superfamily. TrmE GTPase family. In terms of assembly, homodimer. Heterotetramer of two MnmE and two MnmG subunits. The cofactor is K(+).

It is found in the cytoplasm. In terms of biological role, exhibits a very high intrinsic GTPase hydrolysis rate. Involved in the addition of a carboxymethylaminomethyl (cmnm) group at the wobble position (U34) of certain tRNAs, forming tRNA-cmnm(5)s(2)U34. This is tRNA modification GTPase MnmE from Wigglesworthia glossinidia brevipalpis.